The sequence spans 419 residues: Histone acetyltransferase type B catalytic subunit (419 aa).

Alanine 2 carries the N-acetylalanine modification. Lysine 9 and lysine 15 each carry N6-acetyllysine. The interaction with histone H4 N-terminus stretch occupies residues 62–64 (DDE). Phosphoserine; by AMPK is present on serine 190. Residues 225 to 227 (YNY) are interaction with histone H4 N-terminus. Acetyl-CoA is bound by residues 241-243 (MLI) and 248-254 (QGQGHGA). The active-site Proton donor/acceptor is glutamate 276. Serine 343 is subject to Phosphoserine.

The protein belongs to the HAT1 family. Catalytic subunit of the type B histone acetyltransferase (HAT) complex, composed of RBBP7 and HAT1. Interacts with histones H4 and H2A. The interaction is dependent of the ability of RBBP7 to bind to the N-terminus of histones. Component of the histone H3.1 and H3.3 complexes. Post-translationally, phosphorylated by AMPK at Ser-190; phosphorylation increases HAT1 activity.

Its subcellular location is the nucleus matrix. It is found in the mitochondrion. The protein resides in the cytoplasm. The protein localises to the nucleus. It localises to the nucleoplasm. It catalyses the reaction L-lysyl-[protein] + acetyl-CoA = N(6)-acetyl-L-lysyl-[protein] + CoA + H(+). Its function is as follows. Histone acetyltransferase that plays a role in different biological processes including cell cycle progression, glucose metabolism, histone production or DNA damage repair. Coordinates histone production and acetylation via H4 promoter binding. Acetylates histone H4 at 'Lys-5' (H4K5ac) and 'Lys-12' (H4K12ac) and, to a lesser extent, histone H2A at 'Lys-5' (H2AK5ac). Drives H4 production by chromatin binding to support chromatin replication and acetylation. Since transcription of H4 genes is tightly coupled to S-phase, plays an important role in S-phase entry and progression. Promotes homologous recombination in DNA repair by facilitating histone turnover and incorporation of acetylated H3.3 at sites of double-strand breaks. In addition, acetylates other substrates such as chromatin-related proteins. Also acetylates RSAD2 which mediates the interaction of ubiquitin ligase UBE4A with RSAD2 leading to RSAD2 ubiquitination and subsequent degradation. In terms of biological role, (Microbial infection) Contributes to hepatitis B virus (HBV) replication by acetylating histone H4 at the sites of 'Lys-5' and 'Lys-12' on the covalently closed circular DNA (cccDNA) minichromosome leading to its accumulation within the host cell. The polypeptide is Histone acetyltransferase type B catalytic subunit (HAT1) (Homo sapiens (Human)).